The following is a 344-amino-acid chain: CRISPR-associated endonuclease Cas1 2 (344 aa).

3 residues coordinate Mn(2+): Glu-167, His-235, and Glu-250.

This sequence belongs to the CRISPR-associated endonuclease Cas1 family. Homodimer, forms a heterotetramer with a Cas2 homodimer. The cofactor is Mg(2+). Mn(2+) is required as a cofactor.

CRISPR (clustered regularly interspaced short palindromic repeat), is an adaptive immune system that provides protection against mobile genetic elements (viruses, transposable elements and conjugative plasmids). CRISPR clusters contain spacers, sequences complementary to antecedent mobile elements, and target invading nucleic acids. CRISPR clusters are transcribed and processed into CRISPR RNA (crRNA). Acts as a dsDNA endonuclease. Involved in the integration of spacer DNA into the CRISPR cassette. In Rhodospirillum rubrum (strain ATCC 11170 / ATH 1.1.1 / DSM 467 / LMG 4362 / NCIMB 8255 / S1), this protein is CRISPR-associated endonuclease Cas1 2.